Consider the following 486-residue polypeptide: LON peptidase N-terminal domain and RING finger protein C14F5.10c (486 aa).

An RING-type zinc finger spans residues 169-207 (CQICFGMLYDPVVSPCGHTFCGPCLMQALTQSPQCPTCR). The Lon N-terminal domain maps to 250–472 (ESWLPLFISM…LVLIWLTQLQ (223 aa)).

The protein is LON peptidase N-terminal domain and RING finger protein C14F5.10c of Schizosaccharomyces pombe (strain 972 / ATCC 24843) (Fission yeast).